A 369-amino-acid chain; its full sequence is MNTSTNSSAFAPLKNDTFLRACLRQATDYTPIWMMRQAGRFLPEYRATRAKAGSFMGLATNTDYATEVTLQPVERFPIDAAILFSDILTVPDAMGLGLSFALGEGPKFAHPVQDEAAVAKLAVPDMDKLRYVFDAVTSIRKALNGKVPLIGFSGSPWTLGCYMVEGAGSDDYRLVKTMLYSRPDLMHRILQINADSVAQYLNAQIEAGAQAVMIFDSWGGVLADGAFQEFSLAYTARVLAQLKREHNGARIPRIVFTKGGGMWLKEMGLLDCDVLGLDWTVNLAKARAIVGDSKALQGNMDPNVLFASPAQIAAEATRVLDSFGTPYAGEGTGPTHIFNLGHGISQHTPPEHVAALVQAVHEHSRKMRA.

Substrate is bound by residues 36–40, D86, Y162, S217, and H342; that span reads RQAGR.

This sequence belongs to the uroporphyrinogen decarboxylase family. In terms of assembly, homodimer.

The protein localises to the cytoplasm. It catalyses the reaction uroporphyrinogen III + 4 H(+) = coproporphyrinogen III + 4 CO2. Its pathway is porphyrin-containing compound metabolism; protoporphyrin-IX biosynthesis; coproporphyrinogen-III from 5-aminolevulinate: step 4/4. Its function is as follows. Catalyzes the decarboxylation of four acetate groups of uroporphyrinogen-III to yield coproporphyrinogen-III. This chain is Uroporphyrinogen decarboxylase, found in Albidiferax ferrireducens (strain ATCC BAA-621 / DSM 15236 / T118) (Rhodoferax ferrireducens).